Consider the following 466-residue polypeptide: Ras-GEF domain-containing family member 1C (466 aa).

Residues 1–23 show a composition bias toward polar residues; sequence MPQTLSASDMVTPGSLSPPTTEP. 2 disordered regions span residues 1-35 and 443-466; these read MPQT…PLLD and SESP…LGKT. The region spanning 34-164 is the N-terminal Ras-GEF domain; the sequence is LDGAPSSASL…LLQALHQKLA (131 aa). The region spanning 200–446 is the Ras-GEF domain; it reads DPYTLAQQLT…YLASYESESP (247 aa).

Guanine nucleotide exchange factor (GEF). The protein is Ras-GEF domain-containing family member 1C (RASGEF1C) of Macaca fascicularis (Crab-eating macaque).